The sequence spans 203 residues: Ribonuclease HII (203 aa).

The region spanning 18–203 (GQYAGVDEVG…SFRPVREALA (186 aa)) is the RNase H type-2 domain. A divalent metal cation is bound by residues Asp-24, Glu-25, and Asp-116.

Belongs to the RNase HII family. Requires Mn(2+) as cofactor. Mg(2+) serves as cofactor.

It localises to the cytoplasm. The catalysed reaction is Endonucleolytic cleavage to 5'-phosphomonoester.. In terms of biological role, endonuclease that specifically degrades the RNA of RNA-DNA hybrids. This Shewanella pealeana (strain ATCC 700345 / ANG-SQ1) protein is Ribonuclease HII.